Consider the following 664-residue polypeptide: E3 ubiquitin-protein ligase RNF139 (664 aa).

The residue at position 2 (Ala-2) is an N-acetylalanine. Helical transmembrane passes span 51 to 71, 85 to 105, 125 to 145, 154 to 174, 178 to 198, 293 to 313, 323 to 343, 356 to 376, 390 to 410, 420 to 440, 469 to 489, and 495 to 512; these read IVLQ…VLIL, AFLL…HIDF, SLWM…VTLL, LIIL…PLHI, LLFT…AVKL, GMSA…LAFI, LGFV…LSGL, MCLL…PVLM, FPVL…SYVL, LFAV…SLTV, SIIE…TMMF, and IRAF…YLQA. Residues 547–586 form an RING-type; atypical zinc finger; the sequence is CAICYHEFTTSARITPCNHYFHALCLRKWLYIQDTCPMCH. The segment at 601-664 is disordered; it reads VSNNNGFIPP…AAEEFNDDTD (64 aa). The segment covering 616–628 has biased composition (basic and acidic residues); that stretch reads EAVREAAAESDRE. Over residues 629–639 the composition is skewed to acidic residues; sequence LNEDDSTDCDD. The residue at position 634 (Ser-634) is a Phosphoserine. Thr-635 and Thr-663 each carry phosphothreonine.

Interacts with MHC class I and HM13. Interacts with VHL. Component of SCAP-SREBP complex composed of SREBF2, SCAP and RNF139; the complex hampers the interaction between SCAP and SEC24B, thereby reducing SREBF2 proteolytic processing. Interacts with SREBF2 (via C-terminal domain). Interacts with SCAP; the interaction inhibits the interaction of SCAP with SEC24B and hampering the ER to Golgi transport of the SCAP-SREBP complex. Interacts with SEC24B. Interacts with INSIG1 and INSIG2. Interacts with EIF3F and EIF3H; the interaction leads to protein translation inhibitions in a ubiquitination-dependent manner. Interacts with XBP1 isoform 1; the interaction induces ubiquitination and degradation of XBP1 isoform 1. Interacts with AUP1, AMFR and UBE2G2; interaction with AUP1 facilitates interaction of RNF139 with ubiquitin-conjugating enzyme UBE2G2 and ubiquitin ligase AMFR/gp78, leading to sterol-induced ubiquitination of HMGCR and its subsequent proteasomal degradation. In terms of processing, autoubiquitinated. Ubiquitination is induced by sterol and leads to ist degradation via the ubiquitin-proteasome pathway. As to expression, highly expressed in testis, placenta and adrenal gland. Moderate expression in heart, brain, liver, skeletal muscle and pancreas, and low expression in lung and kidney.

It is found in the endoplasmic reticulum membrane. The enzyme catalyses S-ubiquitinyl-[E2 ubiquitin-conjugating enzyme]-L-cysteine + [acceptor protein]-L-lysine = [E2 ubiquitin-conjugating enzyme]-L-cysteine + N(6)-ubiquitinyl-[acceptor protein]-L-lysine.. Its pathway is protein modification; protein ubiquitination. Functionally, E3-ubiquitin ligase; acts as a negative regulator of cell proliferation through mechanisms involving G2/M arrest and cell death. Required for MHC class I ubiquitination in cells expressing the cytomegalovirus protein US2 before dislocation from the endoplasmic reticulum (ER). Affects SREBP processing by hindering the SREBP-SCAP complex translocation from the ER to the Golgi, thereby reducing SREBF2 target gene expression. Involved in the sterol-accelerated degradation of HMGCR. This is achieved through binding of RNF139 to INSIG1 and/or INSIG2 at the ER membrane. In addition, interaction of RNF139 with AUP1 facilitates interaction of RNF139 with ubiquitin-conjugating enzyme UBE2G2 and ubiquitin ligase AMFR, leading to ubiquitination of HMGCR. The ubiquitinated HMGCR is then released from the ER into the cytosol for subsequent destruction. Required for INSIG1 ubiquitination. May be required for EIF3 complex ubiquitination. The protein is E3 ubiquitin-protein ligase RNF139 of Homo sapiens (Human).